The chain runs to 350 residues: MKKIRLELVYLRAIICAIIIITHLLTQITLKHENMEGGSLVLQFYIRNIVIFGTPCFIILSQLLTTLNYQKVTYRYLTTRVKYILIPYILMGLFYSYSESLLTDSSFNKQFIENVLLGQWYGYFIVVIMQFFILSYIIFKINYNLFNSKILLLLSFILQQSFLYYFTNNTAFHDTVLHYYPLSENTIIFGWIFYFFLGAYMGYNYERVLNFLERYLVIMIVLAVATYFVFIALANGDYWNVTSFSYSLTPYNSIMFIVILGICTHFKTMLFNTIQMISAFSFFIYLLHPIILDSLFAYTNIFEDNTMVFLAISLLFILGLCIGVGMILREFYIFRFIIGKQPYKLNINAY.

Transmembrane regions (helical) follow at residues 8–28 (LVYL…LTQI), 40–60 (LVLQ…FIIL), 83–103 (YILI…SLLT), 119–139 (QWYG…YIIF), 146–166 (FNSK…LYYF), 182–202 (LSEN…AYMG), 216–236 (LVIM…LANG), 254–274 (IMFI…FNTI), 276–296 (MISA…DSLF), and 308–328 (VFLA…GMIL).

It belongs to the acyltransferase 3 family.

It localises to the cell membrane. Its function is as follows. Presumably involved in the export of the biofilm adhesin polysaccharide poly-beta-1,6-N-acetyl-D-glucosamine (PNAG, also referred to as PIA) across the cell membrane. The polypeptide is Probable poly-beta-1,6-N-acetyl-D-glucosamine export protein (icaC) (Staphylococcus aureus (strain NCTC 8325 / PS 47)).